Reading from the N-terminus, the 398-residue chain is LIM domain-binding protein 2 (398 aa).

Disordered regions lie at residues 245-280 and 354-398; these read PPAEPTRQTTTKRRKRKNSTNNASNSNAGNNATSAY and DAAN…QASQ. Over residues 263 to 279 the composition is skewed to low complexity; that stretch reads STNNASNSNAGNNATSA. The 40-residue stretch at 323-362 folds into the LIM interaction domain (LID) domain; it reads DVMVVGEPTLMGGEFGDEDERLITRLENTQYDAANGMDDE.

It belongs to the LDB family. In terms of tissue distribution, expressed in adult brain, lung, spleen and kidney. Isoform b is generally expressed at a higher level than isoform a.

It is found in the nucleus. Functionally, binds to the LIM domain of a wide variety of LIM domain-containing transcription factors. This chain is LIM domain-binding protein 2, found in Xenopus laevis (African clawed frog).